Here is a 334-residue protein sequence, read N- to C-terminus: 3-keto-steroid reductase/17-beta-hydroxysteroid dehydrogenase 7 (334 aa).

Over 1 to 229 the chain is Extracellular; the sequence is MRKVVLITGA…VTCPGVVMTN (229 aa). An NAD(+)-binding site is contributed by 8–15; it reads TGASSGIG. N-linked (GlcNAc...) asparagine glycosylation occurs at Asn37. Ser171 lines the substrate pocket. Asn178 carries an N-linked (GlcNAc...) asparagine glycan. The active-site Proton acceptor is the Tyr193. Asn229 is a glycosylation site (N-linked (GlcNAc...) asparagine). Residues 230-250 traverse the membrane as a helical segment; the sequence is LTYGILPPFVWTLLLPVIWLL. Residues 251–334 lie on the Cytoplasmic side of the membrane; it reads RFFAHAFTVT…ITIQKSDHHS (84 aa).

The protein belongs to the short-chain dehydrogenases/reductases (SDR) family. ERG27 subfamily. In terms of assembly, binds to the short form of prolactin receptor. In terms of processing, phosphorylated. Most abundant in ovaries of pregnant animals.

It is found in the endoplasmic reticulum membrane. The enzyme catalyses 17beta-estradiol + NADP(+) = estrone + NADPH + H(+). The catalysed reaction is a 3beta-hydroxysteroid + NADP(+) = a 3-oxosteroid + NADPH + H(+). It catalyses the reaction 4alpha-methyl-5alpha-cholest-7-en-3beta-ol + NADP(+) = 4alpha-methyl-5alpha-cholest-7-en-3-one + NADPH + H(+). It carries out the reaction 4alpha-methyl-5alpha-cholest-8-en-3-one + NADPH + H(+) = 4alpha-methyl-5alpha-cholest-8-en-3beta-ol + NADP(+). The enzyme catalyses 3-dehydro-4alpha-methylzymosterol + NADPH + H(+) = 4alpha-methylzymosterol + NADP(+). The catalysed reaction is zymosterone + NADPH + H(+) = zymosterol + NADP(+). It catalyses the reaction 5alpha-cholest-8-en-3-one + NADPH + H(+) = 5alpha-cholest-8-en-3beta-ol + NADP(+). It carries out the reaction 5alpha-androstane-3beta,17beta-diol + NADP(+) = 17beta-hydroxy-5alpha-androstan-3-one + NADPH + H(+). The enzyme catalyses 5alpha-androstane-3alpha,17beta-diol + NADP(+) = 17beta-hydroxy-5alpha-androstan-3-one + NADPH + H(+). Its pathway is steroid biosynthesis; estrogen biosynthesis. It functions in the pathway steroid biosynthesis; zymosterol biosynthesis; zymosterol from lanosterol: step 5/6. Its function is as follows. Bifunctional enzyme involved in steroid-hormone metabolism and cholesterol biosynthesis. Catalyzes the NADP(H)-dependent reduction of estrogens and androgens and regulates the biological potency of these steroids. Converts estrone (E1) to a more potent estrogen, 17beta-estradiol (E2). Converts dihydrotestosterone (DHT) to an inactive form. Also participates in the post-squalene cholesterol biosynthesis, as a 3-ketosteroid reductase. This chain is 3-keto-steroid reductase/17-beta-hydroxysteroid dehydrogenase 7 (Hsd17b7), found in Rattus norvegicus (Rat).